A 446-amino-acid chain; its full sequence is Tripartite motif-containing protein 43B (446 aa).

The segment at 15-56 (CVICLNYLVDPVTICCGHSFCRPCLCLSWEEAQSPANCPACR) adopts an RING-type zinc-finger fold. The B box-type zinc-finger motif lies at 88–129 (SEKQICGTHRQTKKMFCDMDKSLLCLLCSNSQEHGAHKHYPI). 4 residues coordinate Zn(2+): Cys93, His96, Cys115, and His121. Coiled coils occupy residues 129 to 158 (IEEA…QRNL) and 190 to 220 (LHKE…VKMD). Residues 269-446 (ELTAGPITGL…VRPFFYTGHR (178 aa)) form the B30.2/SPRY domain.

This sequence belongs to the TRIM/RBCC family.

This Homo sapiens (Human) protein is Tripartite motif-containing protein 43B (TRIM43B).